Reading from the N-terminus, the 352-residue chain is Zinc transporter 1 (352 aa).

An N-terminal signal peptide occupies residues 1 to 29; it reads MARTMTMRVSSLLVAVVLLAALSFQACSG. Residues 30-56 lie on the Extracellular side of the membrane; that stretch reads HGGINDGDGQVDAPATPASSSGVRSKG. A helical membrane pass occupies residues 57–77; sequence LIAVKVWCLVILLVFTFAGGV. Over 78–87 the chain is Cytoplasmic; sequence SPYFYRWNES. Residues 88–108 traverse the membrane as a helical segment; that stretch reads FLLLGTQFAAGVFLGTALMHF. The Extracellular portion of the chain corresponds to 109–127; it reads LADSTSTFKGLTTNQYPFS. A helical transmembrane segment spans residues 128–148; it reads FMLTCVGFLLTMLSDLVIAAV. Residues 149-200 are Cytoplasmic-facing; it reads ARRSAAAGVSDNQVSEQQQRQQAEGAVMSRKEEEAAAVAHPAMLVRTSSFED. A helical transmembrane segment spans residues 201-221; that stretch reads AVLLIVALCFHSVFEGIAIGV. Residues 222–230 lie on the Extracellular side of the membrane; it reads SASKSEAWR. The helical transmembrane segment at 231–251 threads the bilayer; the sequence is NLWTIGLHKIFAAVAMGIALL. Residues 252–262 are Cytoplasmic-facing; that stretch reads RMIPKRPFLMT. Residues 263–283 traverse the membrane as a helical segment; the sequence is VVYSLAFAVSSPVGVGIGIAI. Over 284–296 the chain is Extracellular; the sequence is DATSQGRAADWTY. The helical transmembrane segment at 297 to 317 threads the bilayer; it reads AISMGLATGVFIYVAINHLIA. At 318 to 330 the chain is on the cytoplasmic side; that stretch reads KGYRPHHPTAADK. Residues 331 to 351 traverse the membrane as a helical segment; that stretch reads PLFKFLAVLLGVAVMAVVMIW. A topological domain (extracellular) is located at residue D352.

Belongs to the ZIP transporter (TC 2.A.5) family. In terms of tissue distribution, expressed in vascular bundles of roots and leaves.

The protein resides in the cell membrane. Its function is as follows. Zinc transporter that may mediate zinc uptake from the rhizosphere. May also transport other divalent cations. In Oryza sativa subsp. japonica (Rice), this protein is Zinc transporter 1 (ZIP1).